A 296-amino-acid chain; its full sequence is Homoserine kinase (296 aa).

84–94 contacts ATP; the sequence is PLARGLGSSSS.

The protein belongs to the GHMP kinase family. Homoserine kinase subfamily.

The protein localises to the cytoplasm. The enzyme catalyses L-homoserine + ATP = O-phospho-L-homoserine + ADP + H(+). It participates in amino-acid biosynthesis; L-threonine biosynthesis; L-threonine from L-aspartate: step 4/5. Functionally, catalyzes the ATP-dependent phosphorylation of L-homoserine to L-homoserine phosphate. This is Homoserine kinase from Lactococcus lactis subsp. lactis (strain IL1403) (Streptococcus lactis).